The sequence spans 199 residues: Ribonuclease HII (199 aa).

In terms of domain architecture, RNase H type-2 spans 12 to 199 (DLLAGTDEAG…FGPVKKILEG (188 aa)). Residues D18, E19, and D110 each contribute to the a divalent metal cation site.

This sequence belongs to the RNase HII family. Mn(2+) serves as cofactor. Mg(2+) is required as a cofactor.

The protein localises to the cytoplasm. It catalyses the reaction Endonucleolytic cleavage to 5'-phosphomonoester.. Endonuclease that specifically degrades the RNA of RNA-DNA hybrids. In Marinomonas sp. (strain MWYL1), this protein is Ribonuclease HII.